The primary structure comprises 455 residues: Golgi pH regulator (455 aa).

Helical transmembrane passes span 5 to 25, 46 to 66, 79 to 99, 114 to 134, and 150 to 170; these read IDSS…WLFF, VTFA…LGVL, LCVI…YFIV, CLLW…FPIL, and VGVI…VNCP. 2 N-linked (GlcNAc...) asparagine glycosylation sites follow: N180 and N243. 4 consecutive transmembrane segments (helical) span residues 290–310, 343–363, 378–398, and 425–445; these read GYFF…NIVL, ISFI…LITL, VIVL…VLLI, and WFDV…YLAH.

It belongs to the Golgi pH regulator (TC 1.A.38) family. Homotrimer. Interacts with RABL3; the interaction stabilizes GPR89B.

Its subcellular location is the golgi apparatus membrane. The catalysed reaction is iodide(out) = iodide(in). It carries out the reaction chloride(in) = chloride(out). It catalyses the reaction bromide(in) = bromide(out). The enzyme catalyses fluoride(in) = fluoride(out). In terms of biological role, voltage-gated channel that enables the transfer of anions such as iodide, chloride, bromide and fluoride which may function in counter-ion conductance and participates in Golgi acidification. Plays a role in lymphocyte development, probably by acting as a RABL3 effector in hematopoietic cells. In Cricetulus griseus (Chinese hamster), this protein is Golgi pH regulator.